The primary structure comprises 429 residues: Probable M18 family aminopeptidase 2 (429 aa).

3 residues coordinate Zn(2+): His-82, His-156, and His-401.

Belongs to the peptidase M18 family. Zn(2+) is required as a cofactor.

The protein is Probable M18 family aminopeptidase 2 of Pseudomonas putida (strain ATCC 47054 / DSM 6125 / CFBP 8728 / NCIMB 11950 / KT2440).